We begin with the raw amino-acid sequence, 270 residues long: Thiazole synthase (270 aa).

Catalysis depends on Lys111, which acts as the Schiff-base intermediate with DXP. 1-deoxy-D-xylulose 5-phosphate-binding positions include Gly172, 198-199 (AG), and 220-221 (NS). The interval 249–270 (AGRLPTRAQASPSSPTTGKVND) is disordered. Positions 256–270 (AQASPSSPTTGKVND) are enriched in polar residues.

It belongs to the ThiG family. Homotetramer. Forms heterodimers with either ThiH or ThiS.

The protein localises to the cytoplasm. It catalyses the reaction [ThiS sulfur-carrier protein]-C-terminal-Gly-aminoethanethioate + 2-iminoacetate + 1-deoxy-D-xylulose 5-phosphate = [ThiS sulfur-carrier protein]-C-terminal Gly-Gly + 2-[(2R,5Z)-2-carboxy-4-methylthiazol-5(2H)-ylidene]ethyl phosphate + 2 H2O + H(+). It functions in the pathway cofactor biosynthesis; thiamine diphosphate biosynthesis. Catalyzes the rearrangement of 1-deoxy-D-xylulose 5-phosphate (DXP) to produce the thiazole phosphate moiety of thiamine. Sulfur is provided by the thiocarboxylate moiety of the carrier protein ThiS. In vitro, sulfur can be provided by H(2)S. The polypeptide is Thiazole synthase (Synechococcus sp. (strain WH7803)).